The following is a 526-amino-acid chain: Cytochrome P450 monooxygenase COX2 (526 aa).

The N-linked (GlcNAc...) asparagine glycan is linked to N11. Residues 12–31 form a helical membrane-spanning segment; that stretch reads ITTNHVAAAVCAGIAVYAIV. N302 carries an N-linked (GlcNAc...) asparagine glycan. C450 provides a ligand contact to heme.

It belongs to the cytochrome P450 family. Heme serves as cofactor.

The protein resides in the membrane. It participates in secondary metabolite biosynthesis. Its function is as follows. Cytochrome P450 monooxygenase; part of the gene cluster that mediates the biosynthesis of alpha-cuprenene and oxidized derivatives. The alpha-cuprenene synthase COP6 is the only sesquiterpene synthase identified in C.cinereus that appears to be part of a biosynthetic gene cluster and is highly specific since it catalyzes the cyclization of (2E,6E)-farnesyl diphosphate into only one product, alpha-cuprenene. The cytochrome P450 monooxygenase COX2 then oxidizes the cyclohexadiene ring of alpha-cuprenene at positions 1 and 4, yielding first alpha-cuparene, followed by alpha-cuparophenol and a further yet unidentified compound resulting from one additional oxidation step. The cytochrome P450 monooxygenase COX1 then likely catalyzes the oxidation at position 9 of the pentane ring of alpha-cuprenene to give the corresponding hydroxy or ketone derivatives. This chain is Cytochrome P450 monooxygenase COX2, found in Coprinopsis cinerea (strain Okayama-7 / 130 / ATCC MYA-4618 / FGSC 9003) (Inky cap fungus).